A 227-amino-acid polypeptide reads, in one-letter code: Phosphoribosylformylglycinamidine synthase subunit PurQ (227 aa).

The 225-residue stretch at 2–226 folds into the Glutamine amidotransferase type-1 domain; the sequence is KFAVIQFPGS…VKAWKEEQVN (225 aa). Residue Cys86 is the Nucleophile of the active site. Active-site residues include His195 and Glu197.

Part of the FGAM synthase complex composed of 1 PurL, 1 PurQ and 2 PurS subunits.

The protein resides in the cytoplasm. It catalyses the reaction N(2)-formyl-N(1)-(5-phospho-beta-D-ribosyl)glycinamide + L-glutamine + ATP + H2O = 2-formamido-N(1)-(5-O-phospho-beta-D-ribosyl)acetamidine + L-glutamate + ADP + phosphate + H(+). It carries out the reaction L-glutamine + H2O = L-glutamate + NH4(+). Its pathway is purine metabolism; IMP biosynthesis via de novo pathway; 5-amino-1-(5-phospho-D-ribosyl)imidazole from N(2)-formyl-N(1)-(5-phospho-D-ribosyl)glycinamide: step 1/2. In terms of biological role, part of the phosphoribosylformylglycinamidine synthase complex involved in the purines biosynthetic pathway. Catalyzes the ATP-dependent conversion of formylglycinamide ribonucleotide (FGAR) and glutamine to yield formylglycinamidine ribonucleotide (FGAM) and glutamate. The FGAM synthase complex is composed of three subunits. PurQ produces an ammonia molecule by converting glutamine to glutamate. PurL transfers the ammonia molecule to FGAR to form FGAM in an ATP-dependent manner. PurS interacts with PurQ and PurL and is thought to assist in the transfer of the ammonia molecule from PurQ to PurL. In Listeria monocytogenes serotype 4a (strain HCC23), this protein is Phosphoribosylformylglycinamidine synthase subunit PurQ.